The following is a 303-amino-acid chain: ATP synthase gamma chain (303 aa).

This sequence belongs to the ATPase gamma chain family. F-type ATPases have 2 components, CF(1) - the catalytic core - and CF(0) - the membrane proton channel. CF(1) has five subunits: alpha(3), beta(3), gamma(1), delta(1), epsilon(1). CF(0) has three main subunits: a, b and c.

The protein localises to the cell membrane. Its function is as follows. Produces ATP from ADP in the presence of a proton gradient across the membrane. The gamma chain is believed to be important in regulating ATPase activity and the flow of protons through the CF(0) complex. The sequence is that of ATP synthase gamma chain from Oenococcus oeni (strain ATCC BAA-331 / PSU-1).